We begin with the raw amino-acid sequence, 293 residues long: Heterogeneous nuclear ribonucleoprotein C-like 1 (293 aa).

The 72-residue stretch at 16–87 (SRVFIGNLNT…QVVDINLAAE (72 aa)) folds into the RRM domain. Disordered regions lie at residues 137-177 (ALAV…KLKG) and 206-293 (KEQS…QDDS). Positions 177-225 (GDDLQAIKQELTQIKQKVDSLLENLEKIEKEQSKQEVEVKNAKSEEEQS) form a coiled coil. Basic and acidic residues-rich tracts occupy residues 206 to 222 (KEQSKQEVEVKNAKSEE) and 229 to 240 (MKKDETHVKMES). Composition is skewed to acidic residues over residues 242–267 (GGAEDSAEEGDPLDDDVNEDQGDDQL) and 275–284 (KEAEEGEDDR).

Belongs to the RRM HNRPC family. RALY subfamily.

It localises to the nucleus. Functionally, may play a role in nucleosome assembly by neutralizing basic proteins such as A and B core hnRNPs. This chain is Heterogeneous nuclear ribonucleoprotein C-like 1 (HNRNPCL1), found in Homo sapiens (Human).